Consider the following 649-residue polypeptide: 2-hydroxyacyl-CoA lyase 2 (649 aa).

The helical transmembrane segment at 2 to 21 (FHLIPFVVAFLLVFLTWFLI) threads the bilayer. Glutamate 84 is a binding site for thiamine diphosphate. The tract at residues 474–554 (DFVGSAAYIL…AIGVIGNDAC (81 aa)) is thiamine pyrophosphate binding. Positions 525 and 551 each coordinate Mg(2+).

Belongs to the TPP enzyme family. It depends on Mg(2+) as a cofactor. The cofactor is thiamine diphosphate.

The protein localises to the endoplasmic reticulum membrane. It catalyses the reaction 2-hydroxyoctadecanoyl-CoA = heptadecanal + formyl-CoA. It carries out the reaction (2R)-hydroxyhexadecanoyl-CoA = pentadecanal + formyl-CoA. Functionally, endoplasmic reticulum 2-OH acyl-CoA lyase involved in the cleavage (C1 removal) reaction in the fatty acid alpha-oxydation in a thiamine pyrophosphate (TPP)-dependent manner. Involved in the phytosphingosine degradation pathway. The protein is 2-hydroxyacyl-CoA lyase 2 (ilvbl) of Xenopus laevis (African clawed frog).